The following is a 156-amino-acid chain: MLRQLIVSTVGRRMPLQMISQSRLASNLDKTEYTTPGEIVDYDDPPHLPVPEYPVRPDEPLQTRKQRLLYQSRKRGMLENDLLLSTFVAKHLKDFNAEQTAEYDQLINGVSNDWDIFYWATDTKPTPPQFDTEIMRLLKEHVKNHEKVQRIRQPDL.

The N-terminal 24 residues, 1–24 (MLRQLIVSTVGRRMPLQMISQSRL), are a transit peptide targeting the mitochondrion.

Belongs to the SDHAF2 family. Interacts with the flavoprotein subunit within the SDH catalytic dimer.

It localises to the mitochondrion matrix. Plays an essential role in the assembly of succinate dehydrogenase (SDH), an enzyme complex (also referred to as respiratory complex II) that is a component of both the tricarboxylic acid (TCA) cycle and the mitochondrial electron transport chain, and which couples the oxidation of succinate to fumarate with the reduction of ubiquinone (coenzyme Q) to ubiquinol. Required for flavinylation (covalent attachment of FAD) of the flavoprotein subunit of the SDH catalytic dimer. The chain is Succinate dehydrogenase assembly factor 2-B, mitochondrial from Drosophila erecta (Fruit fly).